A 329-amino-acid chain; its full sequence is DNA-directed RNA polymerase subunit alpha (329 aa).

An alpha N-terminal domain (alpha-NTD) region spans residues 1-234; it reads MQGSVTEFLK…EQLDAFVELR (234 aa). The segment at 248–329 is alpha C-terminal domain (alpha-CTD); it reads FDPILLRPVD…WPPASLADDL (82 aa).

This sequence belongs to the RNA polymerase alpha chain family. Homodimer. The RNAP catalytic core consists of 2 alpha, 1 beta, 1 beta' and 1 omega subunit. When a sigma factor is associated with the core the holoenzyme is formed, which can initiate transcription.

It carries out the reaction RNA(n) + a ribonucleoside 5'-triphosphate = RNA(n+1) + diphosphate. DNA-dependent RNA polymerase catalyzes the transcription of DNA into RNA using the four ribonucleoside triphosphates as substrates. This is DNA-directed RNA polymerase subunit alpha from Shewanella baltica (strain OS155 / ATCC BAA-1091).